Reading from the N-terminus, the 71-residue chain is Large ribosomal subunit protein bL31 (71 aa).

Zn(2+) contacts are provided by C16, C18, C36, and C39.

The protein belongs to the bacterial ribosomal protein bL31 family. Type A subfamily. Part of the 50S ribosomal subunit. The cofactor is Zn(2+).

Functionally, binds the 23S rRNA. This chain is Large ribosomal subunit protein bL31, found in Thermotoga maritima (strain ATCC 43589 / DSM 3109 / JCM 10099 / NBRC 100826 / MSB8).